The chain runs to 753 residues: 5-methyltetrahydropteroyltriglutamate--homocysteine methyltransferase (753 aa).

5-methyltetrahydropteroyltri-L-glutamate-binding positions include 17–20 (RELK) and K117. Residues 431 to 433 (IGS) and E484 contribute to the L-homocysteine site. L-methionine contacts are provided by residues 431–433 (IGS) and E484. 5-methyltetrahydropteroyltri-L-glutamate contacts are provided by residues 515–516 (RC) and W561. D599 contacts L-homocysteine. Position 599 (D599) interacts with L-methionine. E605 lines the 5-methyltetrahydropteroyltri-L-glutamate pocket. Residues H641, C643, and E665 each contribute to the Zn(2+) site. Residue H694 is the Proton donor of the active site. Residue C726 coordinates Zn(2+).

Belongs to the vitamin-B12 independent methionine synthase family. Zn(2+) is required as a cofactor.

It catalyses the reaction 5-methyltetrahydropteroyltri-L-glutamate + L-homocysteine = tetrahydropteroyltri-L-glutamate + L-methionine. Its pathway is amino-acid biosynthesis; L-methionine biosynthesis via de novo pathway; L-methionine from L-homocysteine (MetE route): step 1/1. Its function is as follows. Catalyzes the transfer of a methyl group from 5-methyltetrahydrofolate to homocysteine resulting in methionine formation. This Escherichia coli (strain SMS-3-5 / SECEC) protein is 5-methyltetrahydropteroyltriglutamate--homocysteine methyltransferase.